Reading from the N-terminus, the 59-residue chain is MAVPKRKTSPSKRGMRRSADALKAPTYIEDKNSGELRRPHHIDLKTGMYRGRSVLPAKD.

A compositionally biased stretch (basic residues) spans 1–16 (MAVPKRKTSPSKRGMR). The interval 1–41 (MAVPKRKTSPSKRGMRRSADALKAPTYIEDKNSGELRRPHH) is disordered. Basic and acidic residues predominate over residues 28-41 (IEDKNSGELRRPHH).

This sequence belongs to the bacterial ribosomal protein bL32 family.

The polypeptide is Large ribosomal subunit protein bL32 (Bartonella henselae (strain ATCC 49882 / DSM 28221 / CCUG 30454 / Houston 1) (Rochalimaea henselae)).